The chain runs to 766 residues: Serine/threonine-protein kinase PKH1 (766 aa).

The tract at residues 1–52 (MGNRSLTEADHALLSKPLVPTSAEHTQTQEYPRPFVDGSNSQSGSELQASPQ) is disordered. Residues 38–52 (GSNSQSGSELQASPQ) are compositionally biased toward polar residues. The Protein kinase domain maps to 125–391 (FKFGEQLGDG…IKQIKAHLFF (267 aa)). ATP contacts are provided by residues 135–137 (SYS) and lysine 154. Residues 156–201 (LSKEYLIRQKKVKYVTVEKLALQKLNGTKGIFKLFFTFQDEASLYF) are PIF-pocket. ATP contacts are provided by residues 204–206 (EYA) and aspartate 210. Aspartate 249 (proton acceptor) is an active-site residue. The ATP site is built by glutamate 253 and aspartate 267. Phosphoserine is present on residues serine 294 and serine 296. A compositionally biased stretch (polar residues) spans 476–495 (TSQPKLGSKSSTSVRSASNN). Disordered regions lie at residues 476-529 (TSQP…NRSR) and 725-745 (PEEG…SSSN). Residues 511 to 521 (SVSSPSISTTS) show a composition bias toward low complexity. A compositionally biased stretch (polar residues) spans 735–745 (PTSLQTRSSSN).

The protein belongs to the protein kinase superfamily. AGC Ser/Thr protein kinase family. PDPK1 subfamily.

It catalyses the reaction L-seryl-[protein] + ATP = O-phospho-L-seryl-[protein] + ADP + H(+). The enzyme catalyses L-threonyl-[protein] + ATP = O-phospho-L-threonyl-[protein] + ADP + H(+). Activates YPK1 by phosphorylating of a threonine residue. The sequence is that of Serine/threonine-protein kinase PKH1 (PKH1) from Saccharomyces cerevisiae (strain ATCC 204508 / S288c) (Baker's yeast).